A 313-amino-acid polypeptide reads, in one-letter code: Proclavaminate amidinohydrolase (313 aa).

Histidine 121, aspartate 144, histidine 146, aspartate 148, aspartate 235, and aspartate 237 together coordinate Mn(2+).

This sequence belongs to the arginase family. In terms of assembly, homohexamer. Mn(2+) serves as cofactor.

It catalyses the reaction amidinoproclavaminate + H2O = proclavaminate + urea. Its pathway is antibiotic biosynthesis; clavulanate biosynthesis; clavulanate from D-glyceraldehyde 3-phosphate and L-arginine: step 4/8. This Streptomyces clavuligerus protein is Proclavaminate amidinohydrolase (pah).